The chain runs to 418 residues: Putative competence-damage inducible protein (418 aa).

It belongs to the CinA family.

The sequence is that of Putative competence-damage inducible protein from Streptococcus pneumoniae serotype 2 (strain D39 / NCTC 7466).